Consider the following 1877-residue polypeptide: Neuron navigator 1 (1877 aa).

Methionine 1 is modified (N-acetylmethionine). The disordered stretch occupies residues 1 to 59 (MLGSSVKSVQPEVELSSGGGDEGADEPRGAGRKAAAADGRGMLPKRAKAPGGGGGMAKA). The span at 32 to 41 (RKAAAADGRG) shows a compositional bias: low complexity. Phosphoserine occurs at positions 90, 142, and 152. The disordered stretch occupies residues 114–225 (DMAKAPKGLG…PVPSAKGQEE (112 aa)). Threonine 159 bears the Phosphothreonine mark. A phosphoserine mark is found at serine 194 and serine 199. Over residues 205-214 (SSKAKAQKSS) the composition is skewed to low complexity. Residues 255–280 (ESQRKRTVQNVLDLRQNLEETMSSLR) adopt a coiled-coil conformation. The disordered stretch occupies residues 294-336 (YDSDDANPRSVSSLSNRSSPLSWRYGQSSPRLQAGDAPSVGGS). A phosphoserine mark is found at serine 296, serine 308, serine 312, serine 362, and serine 391. Residues 301–315 (PRSVSSLSNRSSPLS) are compositionally biased toward low complexity. 2 disordered regions span residues 386–839 (KSGY…PLPS) and 892–989 (MSLP…PMSL). Composition is skewed to low complexity over residues 411 to 425 (DESS…DASD) and 433 to 448 (NASS…PTAS). Phosphoserine is present on residues serine 452, serine 474, serine 476, and serine 490. Residues 476–486 (SEEKAPKKLEY) are compositionally biased toward basic and acidic residues. Positions 503-519 (ERPESCDDSSKGGELKK) are enriched in basic and acidic residues. Position 528 is a phosphoserine (serine 528). Threonine 534 is modified (phosphothreonine). Serine 541 carries the post-translational modification Phosphoserine. Threonine 544 carries the post-translational modification Phosphothreonine. Over residues 555-566 (GKPEGKATDKGK) the composition is skewed to basic and acidic residues. Phosphothreonine is present on threonine 572. A compositionally biased stretch (basic and acidic residues) spans 581 to 591 (AGRDRLSDAKK). Composition is skewed to polar residues over residues 615 to 635 (GTAT…QKSS) and 645 to 655 (RKTSLDVSNSA). Position 648 is a phosphoserine (serine 648). Residue arginine 688 is modified to Omega-N-methylarginine. 2 stretches are compositionally biased toward polar residues: residues 698-710 (IDPS…QGGL) and 724-733 (GRTTPAPVNQ). A coiled-coil region spans residues 731-756 (VNQTDREKEKAKAKAVALDSDNISLK). Residues serine 750, serine 754, serine 760, serine 797, and serine 808 each carry the phosphoserine modification. The segment covering 751-773 (DNISLKSIGSPESTPKNQASHPT) has biased composition (polar residues). The span at 805–818 (NSNSLDLPSSSDTT) shows a compositional bias: low complexity. The segment covering 902–913 (TPVPTPPAPPAA) has biased composition (pro residues). Serine 1000 bears the Phosphoserine mark. Phosphothreonine is present on threonine 1006. The stretch at 1072 to 1163 (SSAEERMQSE…SEAQAVIQGA (92 aa)) forms a coiled coil. Phosphothreonine is present on threonine 1170. Disordered regions lie at residues 1172-1204 (KELR…KDAD), 1244-1306 (ATPD…EKKE), 1359-1383 (LKVA…LSSP), and 1810-1843 (KLYH…SLDS). Serine 1181 carries the phosphoserine modification. Positions 1181-1200 (SSDSISSLNSITSHSSIGSS) are enriched in low complexity. A compositionally biased stretch (polar residues) spans 1246–1264 (PDSSAPSSPKLQHGSTETA). Serine 1265 carries the phosphoserine modification. The span at 1265 to 1275 (SPSIKSSTSSS) shows a compositional bias: low complexity. The stretch at 1303–1362 (EKKEVSELRSELWEKEMKLTDIRLEALNSAHQLDQLRETMHNMQLEVDLLKAENDRLKVA) forms a coiled coil. The segment covering 1366–1383 (SSGSTPGQVPGSSALSSP) has biased composition (polar residues). Serine 1382 carries the post-translational modification Phosphoserine.

This sequence belongs to the Nav/unc-53 family. Interacts with tubulin. In terms of tissue distribution, broadly expressed at low levels. Expressed at high levels in heart, skeletal muscle and placenta.

Its subcellular location is the cytoplasm. The protein resides in the cytoskeleton. Functionally, may be involved in neuronal migration. This is Neuron navigator 1 (NAV1) from Homo sapiens (Human).